A 338-amino-acid polypeptide reads, in one-letter code: Phenylalanine--tRNA ligase alpha subunit (338 aa).

Glu-252 lines the Mg(2+) pocket.

It belongs to the class-II aminoacyl-tRNA synthetase family. Phe-tRNA synthetase alpha subunit type 1 subfamily. As to quaternary structure, tetramer of two alpha and two beta subunits. Mg(2+) is required as a cofactor.

Its subcellular location is the cytoplasm. The catalysed reaction is tRNA(Phe) + L-phenylalanine + ATP = L-phenylalanyl-tRNA(Phe) + AMP + diphosphate + H(+). This chain is Phenylalanine--tRNA ligase alpha subunit, found in Pseudomonas aeruginosa (strain UCBPP-PA14).